The primary structure comprises 496 residues: L-arabinose isomerase (496 aa).

Mn(2+) contacts are provided by glutamate 302, glutamate 329, histidine 346, and histidine 445.

It belongs to the arabinose isomerase family. Mn(2+) is required as a cofactor.

It carries out the reaction beta-L-arabinopyranose = L-ribulose. The protein operates within carbohydrate degradation; L-arabinose degradation via L-ribulose; D-xylulose 5-phosphate from L-arabinose (bacterial route): step 1/3. Its function is as follows. Catalyzes the conversion of L-arabinose to L-ribulose. The protein is L-arabinose isomerase of Thermotoga maritima (strain ATCC 43589 / DSM 3109 / JCM 10099 / NBRC 100826 / MSB8).